A 78-amino-acid polypeptide reads, in one-letter code: Large ribosomal subunit protein bL28 (78 aa).

The tract at residues 1-31 is disordered; it reads MAAHCQVTGAEPGFGHSISHSHRRNKRRFDP.

It belongs to the bacterial ribosomal protein bL28 family.

This Paenarthrobacter aurescens (strain TC1) protein is Large ribosomal subunit protein bL28.